The following is a 236-amino-acid chain: 2-C-methyl-D-erythritol 4-phosphate cytidylyltransferase (236 aa).

Belongs to the IspD/TarI cytidylyltransferase family. IspD subfamily.

It carries out the reaction 2-C-methyl-D-erythritol 4-phosphate + CTP + H(+) = 4-CDP-2-C-methyl-D-erythritol + diphosphate. The protein operates within isoprenoid biosynthesis; isopentenyl diphosphate biosynthesis via DXP pathway; isopentenyl diphosphate from 1-deoxy-D-xylulose 5-phosphate: step 2/6. Functionally, catalyzes the formation of 4-diphosphocytidyl-2-C-methyl-D-erythritol from CTP and 2-C-methyl-D-erythritol 4-phosphate (MEP). This Burkholderia thailandensis (strain ATCC 700388 / DSM 13276 / CCUG 48851 / CIP 106301 / E264) protein is 2-C-methyl-D-erythritol 4-phosphate cytidylyltransferase.